The chain runs to 397 residues: Presenilin-like protein At2g29900 (397 aa).

At methionine 1–glutamate 17 the chain is on the cytoplasmic side. Residues leucine 18–isoleucine 38 traverse the membrane as a helical segment. Residues leucine 39–asparagine 76 lie on the Lumenal side of the membrane. Residues serine 77–leucine 97 form a helical membrane-spanning segment. Residues arginine 98–tyrosine 106 are Cytoplasmic-facing. A helical membrane pass occupies residues methionine 107 to isoleucine 127. The Lumenal segment spans residues aspartate 128 to aspartate 135. A helical transmembrane segment spans residues serine 136–methionine 156. Residues serine 157–lysine 158 lie on the Cytoplasmic side of the membrane. A helical transmembrane segment spans residues phenylalanine 159 to phenylalanine 179. Residues threonine 180–tryptophan 188 are Lumenal-facing. The helical transmembrane segment at valine 189–leucine 209 threads the bilayer. Aspartate 198 is an active-site residue. Over arginine 210 to glycine 305 the chain is Cytoplasmic. The chain crosses the membrane as a helical span at residues leucine 306 to valine 326. The active site involves aspartate 318. The Lumenal portion of the chain corresponds to glycine 327–threonine 336. A helical membrane pass occupies residues valine 337–valine 357. Residues tyrosine 358–proline 366 are Cytoplasmic-facing. The short motif at proline 363 to leucine 365 is the PAL element. Residues valine 367–valine 387 constitute an intramembrane region (helical). Over valine 388–phenylalanine 397 the chain is Cytoplasmic.

The protein belongs to the peptidase A22A family. In terms of assembly, homodimer. Probable component of the gamma-secretase complex, a complex composed of a presenilin homodimer, nicastrin, APH1 and PEN2.

It is found in the endoplasmic reticulum membrane. The protein resides in the golgi apparatus membrane. Probable subunit of the gamma-secretase complex, an endoprotease complex that catalyzes the intramembrane cleavage of integral membrane proteins such as Notch receptors. The chain is Presenilin-like protein At2g29900 from Arabidopsis thaliana (Mouse-ear cress).